Consider the following 206-residue polypeptide: Probable GTP-binding protein EngB (206 aa).

Residues 8-195 (RDAEVVLVGR…EECLRTRFHE (188 aa)) form the EngB-type G domain. GTP is bound by residues 16 to 23 (GRSNVGKS), 41 to 45 (GVTRQ), 60 to 63 (DLPG), 140 to 143 (NKTD), and 175 to 177 (ICA). 2 residues coordinate Mg(2+): Ser23 and Thr43.

This sequence belongs to the TRAFAC class TrmE-Era-EngA-EngB-Septin-like GTPase superfamily. EngB GTPase family. It depends on Mg(2+) as a cofactor.

Its function is as follows. Necessary for normal cell division and for the maintenance of normal septation. In Halorubrum lacusprofundi (strain ATCC 49239 / DSM 5036 / JCM 8891 / ACAM 34), this protein is Probable GTP-binding protein EngB.